Consider the following 873-residue polypeptide: Putative receptor-like protein kinase At5g39000 (873 aa).

Residues 1–21 (MIRHALLIFSILVSTPIVGEG) form the signal peptide. At 22–445 (ATSTYEPTDV…KNKSHILPIT (424 aa)) the chain is on the extracellular side. N-linked (GlcNAc...) asparagine glycosylation is found at asparagine 49, asparagine 64, asparagine 138, asparagine 168, asparagine 216, asparagine 266, asparagine 300, asparagine 340, and asparagine 437. The helical transmembrane segment at 446-466 (LAVVGSLVVLAMFVVGVLVIM) threads the bilayer. Residues 467–873 (KKKKKSKPST…FSEINEPKAR (407 aa)) are Cytoplasmic-facing. A disordered region spans residues 472–494 (SKPSTNSSWCPLPHGTDSTNTKP). A Protein kinase domain is found at 518-803 (FEDKLIIGVG…EFALQLHETA (286 aa)). Residues 524–532 (IGVGGFGSV) and lysine 547 each bind ATP. The active-site Proton acceptor is aspartate 646. Residues 813–843 (LDLMPSGEVGTTTDGEDDLFSRTTGHVGKST) are disordered. The span at 833-843 (SRTTGHVGKST) shows a compositional bias: polar residues.

Belongs to the protein kinase superfamily. Ser/Thr protein kinase family.

Its subcellular location is the membrane. This chain is Putative receptor-like protein kinase At5g39000, found in Arabidopsis thaliana (Mouse-ear cress).